The sequence spans 344 residues: Geranylgeranyl pyrophosphate synthase 10, mitochondrial (344 aa).

A mitochondrion-targeting transit peptide spans 1 to 40 (MENREVFVYIVISIFRSLQFLFWRFRPRYNDVTSALTRPL). Residues Lys-91, Arg-94, and His-123 each contribute to the isopentenyl diphosphate site. Mg(2+) contacts are provided by Asp-130 and Asp-136. Arg-141 lines the dimethylallyl diphosphate pocket. Arg-142 is a binding site for isopentenyl diphosphate. Residues Lys-229, Thr-230, Gln-267, Lys-284, and Lys-294 each coordinate dimethylallyl diphosphate.

The protein belongs to the FPP/GGPP synthase family. In terms of assembly, monomer. Mg(2+) is required as a cofactor.

The protein resides in the mitochondrion. The enzyme catalyses isopentenyl diphosphate + dimethylallyl diphosphate = (2E)-geranyl diphosphate + diphosphate. The catalysed reaction is isopentenyl diphosphate + (2E)-geranyl diphosphate = (2E,6E)-farnesyl diphosphate + diphosphate. It carries out the reaction isopentenyl diphosphate + (2E,6E)-farnesyl diphosphate = (2E,6E,10E)-geranylgeranyl diphosphate + diphosphate. It functions in the pathway isoprenoid biosynthesis; farnesyl diphosphate biosynthesis; farnesyl diphosphate from geranyl diphosphate and isopentenyl diphosphate: step 1/1. The protein operates within isoprenoid biosynthesis; geranyl diphosphate biosynthesis; geranyl diphosphate from dimethylallyl diphosphate and isopentenyl diphosphate: step 1/1. It participates in isoprenoid biosynthesis; geranylgeranyl diphosphate biosynthesis; geranylgeranyl diphosphate from farnesyl diphosphate and isopentenyl diphosphate: step 1/1. Catalyzes the trans-addition of the three molecules of IPP onto DMAPP to form geranylgeranyl pyrophosphate. The polypeptide is Geranylgeranyl pyrophosphate synthase 10, mitochondrial (Arabidopsis thaliana (Mouse-ear cress)).